A 447-amino-acid chain; its full sequence is Na(+)-translocating NADH-quinone reductase subunit A (447 aa).

It belongs to the NqrA family. Composed of six subunits; NqrA, NqrB, NqrC, NqrD, NqrE and NqrF.

The enzyme catalyses a ubiquinone + n Na(+)(in) + NADH + H(+) = a ubiquinol + n Na(+)(out) + NAD(+). Functionally, NQR complex catalyzes the reduction of ubiquinone-1 to ubiquinol by two successive reactions, coupled with the transport of Na(+) ions from the cytoplasm to the periplasm. NqrA to NqrE are probably involved in the second step, the conversion of ubisemiquinone to ubiquinol. In Klebsiella pneumoniae (strain 342), this protein is Na(+)-translocating NADH-quinone reductase subunit A.